The sequence spans 179 residues: Adenine phosphoribosyltransferase (179 aa).

Belongs to the purine/pyrimidine phosphoribosyltransferase family. In terms of assembly, homodimer.

The protein localises to the cytoplasm. The enzyme catalyses AMP + diphosphate = 5-phospho-alpha-D-ribose 1-diphosphate + adenine. It participates in purine metabolism; AMP biosynthesis via salvage pathway; AMP from adenine: step 1/1. In terms of biological role, catalyzes a salvage reaction resulting in the formation of AMP, that is energically less costly than de novo synthesis. The protein is Adenine phosphoribosyltransferase of Helicobacter pylori (strain HPAG1).